The sequence spans 151 residues: Troponin C, isoallergen Bla g 6.0101 (151 aa).

EF-hand domains follow at residues 7–42 (EQIQ…LGHR), 43–78 (LDDD…FLVE), 83–118 (AMQQ…LDDK), and 119–151 (ITAE…MTGE). Residues D56, D58, S60, E62, and E67 each contribute to the Ca(2+) site. Residues D132, D134, S136, T138, and E143 each contribute to the Ca(2+) site.

It belongs to the troponin C family.

In terms of biological role, troponin is the central regulatory protein of striated muscle contraction. It consists of three components: Troponin-I (Tn-I) which is the inhibitor of actomyosin ATPase, Troponin-T (Tn-T) which contains the binding site for tropomyosin and Troponin-C (Tn-C). The binding of calcium to Tn-C abolishes the inhibitory action of Tn on actin filaments. In Blattella germanica (German cockroach), this protein is Troponin C, isoallergen Bla g 6.0101.